Consider the following 284-residue polypeptide: Spermidine synthase (284 aa).

Residues 6 to 241 (NGWFSEISEF…GSIGFILCSL (236 aa)) enclose the PABS domain. Gln-37 contacts S-adenosyl 3-(methylsulfanyl)propylamine. Tyr-67 lines the putrescine pocket. S-adenosyl 3-(methylsulfanyl)propylamine-binding positions include Gln-68, Asp-92, Glu-112, 143 to 144 (DG), and Asp-161. The Proton acceptor role is filled by Asp-161. Residues 161–164 (DSSD) and Tyr-229 each bind putrescine.

It belongs to the spermidine/spermine synthase family.

The enzyme catalyses S-adenosyl 3-(methylsulfanyl)propylamine + putrescine = S-methyl-5'-thioadenosine + spermidine + H(+). It participates in amine and polyamine biosynthesis; spermidine biosynthesis; spermidine from putrescine: step 1/1. Functionally, catalyzes the production of spermidine from putrescine and decarboxylated S-adenosylmethionine (dcSAM). Has a strong preference for putrescine as substrate. This Dictyostelium discoideum (Social amoeba) protein is Spermidine synthase (spsA).